The chain runs to 441 residues: Membrane-bound protease PH1510 (441 aa).

The signal sequence occupies residues 1–20 (MRRILLSMIVLIFLASPILA). 64-67 (GGRA) contributes to the substrate binding site. S97 functions as the Nucleophile in the catalytic mechanism. A substrate-binding site is contributed by 119–124 (ACRPIL). K138 (proton donor/acceptor) is an active-site residue. 4 consecutive transmembrane segments (helical) span residues 239 to 259 (VAYL…LTPG), 271 to 291 (IILA…ILLI), 307 to 327 (FGLF…LLFG), and 344 to 364 (ILII…MAAV).

This sequence belongs to the peptidase S14 family. As to quaternary structure, homodimer.

It is found in the membrane. Its activity is regulated as follows. Inhibited by divalent metal cations, including Mg(2+), Mn(2+), Ca(2+) and Zn(2+). Mildly inhibited by 0.01 % SDS and 0.1% dodecyl-beta-D-maltoside. Activity is nearly abolished by 1 % SDS. Its function is as follows. Protease that cleaves its substrates preferentially near hydrophobic or aromatic amino acid residues. Can degrade casein and the stomatin homolog PH1511 (in vitro). The protein is Membrane-bound protease PH1510 of Pyrococcus horikoshii (strain ATCC 700860 / DSM 12428 / JCM 9974 / NBRC 100139 / OT-3).